The chain runs to 345 residues: Fructose-bisphosphate aldolase, plasmid (345 aa).

S50 is a binding site for D-glyceraldehyde 3-phosphate. D83 (proton donor) is an active-site residue. Zn(2+) contacts are provided by H84, D105, E142, and H198. G199 contacts dihydroxyacetone phosphate. H232 contacts Zn(2+). Dihydroxyacetone phosphate contacts are provided by residues 233-235 (GSS) and 275-278 (NIDT).

It belongs to the class II fructose-bisphosphate aldolase family. In terms of assembly, homodimer. It depends on Zn(2+) as a cofactor.

The catalysed reaction is beta-D-fructose 1,6-bisphosphate = D-glyceraldehyde 3-phosphate + dihydroxyacetone phosphate. Its pathway is carbohydrate biosynthesis; Calvin cycle. It participates in carbohydrate degradation; glycolysis; D-glyceraldehyde 3-phosphate and glycerone phosphate from D-glucose: step 4/4. In terms of biological role, catalyzes the aldol condensation of dihydroxyacetone phosphate (DHAP or glycerone-phosphate) with glyceraldehyde 3-phosphate (G3P) to form fructose 1,6-bisphosphate (FBP) in gluconeogenesis and the reverse reaction in glycolysis. The polypeptide is Fructose-bisphosphate aldolase, plasmid (cbbAP) (Cupriavidus necator (strain ATCC 17699 / DSM 428 / KCTC 22496 / NCIMB 10442 / H16 / Stanier 337) (Ralstonia eutropha)).